The sequence spans 585 residues: Serine/threonine-protein kinase PknI (585 aa).

Residues 1–349 lie on the Cytoplasmic side of the membrane; the sequence is MALASGVTFA…ASPTRRRPRR (349 aa). The 241-residue stretch at 12 to 252 folds into the Protein kinase domain; that stretch reads YTVVRMLGCS…SCREFADAMN (241 aa). Residues 18–26 and Lys-41 contribute to the ATP site; that span reads LGCSAMGEV. Lys-41, Asp-90, and Val-92 together coordinate ADP. Catalysis depends on Asp-137, which acts as the Proton acceptor. A helical membrane pass occupies residues 350 to 370; sequence ILVGAVAVLLLAGLFAVGIVI. Over 371–585 the chain is Extracellular; it reads GRKTNTTATE…PTTTAPGPGR (215 aa). The tract at residues 546–585 is disordered; the sequence is SGDLPPAVTVPDPATIPDTPDTTSTATLTPPTTTAPGPGR. Positions 554-585 are enriched in low complexity; sequence TVPDPATIPDTPDTTSTATLTPPTTTAPGPGR.

It belongs to the protein kinase superfamily. Ser/Thr protein kinase family. Mn(2+) is required as a cofactor. Post-translationally, autophosphorylated at serine and threonine residues.

Its subcellular location is the cytoplasm. The protein resides in the cell membrane. It catalyses the reaction L-seryl-[protein] + ATP = O-phospho-L-seryl-[protein] + ADP + H(+). The catalysed reaction is L-threonyl-[protein] + ATP = O-phospho-L-threonyl-[protein] + ADP + H(+). Functionally, plays an important role in slowing down the growth of mycobacteria within the infected host. This Mycobacterium bovis (strain ATCC BAA-935 / AF2122/97) protein is Serine/threonine-protein kinase PknI (pknI).